The chain runs to 236 residues: Biosynthetic peptidoglycan transglycosylase (236 aa).

Residues 12-31 (ALLWFAAGSVLVVLVLRWVP) traverse the membrane as a helical segment.

It belongs to the glycosyltransferase 51 family.

It is found in the cell inner membrane. It catalyses the reaction [GlcNAc-(1-&gt;4)-Mur2Ac(oyl-L-Ala-gamma-D-Glu-L-Lys-D-Ala-D-Ala)](n)-di-trans,octa-cis-undecaprenyl diphosphate + beta-D-GlcNAc-(1-&gt;4)-Mur2Ac(oyl-L-Ala-gamma-D-Glu-L-Lys-D-Ala-D-Ala)-di-trans,octa-cis-undecaprenyl diphosphate = [GlcNAc-(1-&gt;4)-Mur2Ac(oyl-L-Ala-gamma-D-Glu-L-Lys-D-Ala-D-Ala)](n+1)-di-trans,octa-cis-undecaprenyl diphosphate + di-trans,octa-cis-undecaprenyl diphosphate + H(+). The protein operates within cell wall biogenesis; peptidoglycan biosynthesis. In terms of biological role, peptidoglycan polymerase that catalyzes glycan chain elongation from lipid-linked precursors. The sequence is that of Biosynthetic peptidoglycan transglycosylase from Pseudomonas syringae pv. syringae (strain B728a).